The sequence spans 643 residues: MDLYSELTAKYQTVPAIATEIINLEAILNLPKPTEAFMSDIHGEYNAFQHVLRNGSGNVKSKIRSCFRDEMTEATLQRFAFLVYYPSERMAAIHREMAGDDLQQWYLTTFRRLIRLLAFTATKYTRSKVRKAMAPEFVYITEELLYNDADTPDKLAYYWQIIRNLIVLEQADQWIAATCQTIQRLTVDHFHVVGDIYDRGPAPDQVVESLIRRDRRHSVDIQWGNHDILWIGGAAGSALCIANLVRISARYNNLSILEDVYGINLRHLARLAEQYYQDNPAFSPKMERSDRPITEAERLQITQIHQAIAMIQFKLEGPVIKRRPEFDMDHRLVLEKLAPDFSTIKLNGDTYTIENGCFATVDPADPYKLLPEEQEVIDSLVESFTHSEKLHRHMDFLLDHGSMYLRYNRNLLLHGCVPVDEDGNFIGLTIKGTTYTGRQLFDMLEANLRLAYSQPTENADLATDLMWYLWTGPNSPLFGKHDMTTFERYFISDPKAHVEGRNPYYHLRKDPEFIKKILAEFVLDPEVGHVINGHTPVKKGTDPIMANNKMIVIDGGFSKPYQKTTGIGGYTLLDNSYGMQLVTHQPFTTKADAITNLTDIISTRRVVETEARRRTVAETDIGTELQDEVEVLKRRLGELREED.

This sequence belongs to the FBPase class 3 family. Mn(2+) serves as cofactor.

The catalysed reaction is beta-D-fructose 1,6-bisphosphate + H2O = beta-D-fructose 6-phosphate + phosphate. Its pathway is carbohydrate biosynthesis; gluconeogenesis. The protein is Fructose-1,6-bisphosphatase class 3 of Lacticaseibacillus paracasei (strain ATCC 334 / BCRC 17002 / CCUG 31169 / CIP 107868 / KCTC 3260 / NRRL B-441) (Lactobacillus paracasei).